Here is a 207-residue protein sequence, read N- to C-terminus: Small ribosomal subunit protein uS4 (207 aa).

Residues 97 to 159 (SRLDNVCYRM…AKSQLRIQAA (63 aa)) enclose the S4 RNA-binding domain.

Belongs to the universal ribosomal protein uS4 family. Part of the 30S ribosomal subunit. Contacts protein S5. The interaction surface between S4 and S5 is involved in control of translational fidelity.

Functionally, one of the primary rRNA binding proteins, it binds directly to 16S rRNA where it nucleates assembly of the body of the 30S subunit. With S5 and S12 plays an important role in translational accuracy. This is Small ribosomal subunit protein uS4 from Halorhodospira halophila (strain DSM 244 / SL1) (Ectothiorhodospira halophila (strain DSM 244 / SL1)).